The chain runs to 193 residues: Ion-translocating oxidoreductase complex subunit B (193 aa).

The tract at residues 1 to 26 (MSTMLIAVILLTLLALFFGVLLGFAA) is hydrophobic. Positions 32–90 (EGNPIVDELEAILPQTQCGQCGYPGCRPYAEAIANGDKVNKCPPGGTATMEKLANLMGV) constitute a 4Fe-4S domain. Residues Cys-49, Cys-52, Cys-57, Cys-73, Cys-114, Cys-117, Cys-120, Cys-124, Cys-144, Cys-147, Cys-150, and Cys-154 each contribute to the [4Fe-4S] cluster site. 2 4Fe-4S ferredoxin-type domains span residues 105-134 (KVAYIREDECIGCTKCIQACPVDAIIGAGK) and 136-164 (MHTVLTADCTGCDLCVEPCPVDCIDMIPV).

Belongs to the 4Fe4S bacterial-type ferredoxin family. RnfB subfamily. In terms of assembly, the complex is composed of six subunits: RnfA, RnfB, RnfC, RnfD, RnfE and RnfG. [4Fe-4S] cluster serves as cofactor.

The protein resides in the cell inner membrane. Part of a membrane-bound complex that couples electron transfer with translocation of ions across the membrane. This is Ion-translocating oxidoreductase complex subunit B from Shewanella sp. (strain ANA-3).